Consider the following 319-residue polypeptide: ATP-dependent 6-phosphofructokinase (319 aa).

Residue Gly-11 coordinates ATP. Residue 21 to 25 participates in ADP binding; that stretch reads RAVVR. Residues 72 to 73 and 102 to 105 each bind ATP; these read RC and GDGS. A Mg(2+)-binding site is contributed by Asp-103. 125 to 127 provides a ligand contact to substrate; it reads TID. Asp-127 (proton acceptor) is an active-site residue. Arg-154 lines the ADP pocket. Substrate is bound by residues Arg-162 and 169-171; that span reads MGR. Residues 185–187, Arg-211, and 213–215 contribute to the ADP site; these read GAE and KKH. Substrate-binding positions include Glu-222, Arg-243, and 249-252; that span reads HVQR.

This sequence belongs to the phosphofructokinase type A (PFKA) family. ATP-dependent PFK group I subfamily. Prokaryotic clade 'B1' sub-subfamily. Homotetramer. The cofactor is Mg(2+).

Its subcellular location is the cytoplasm. The enzyme catalyses beta-D-fructose 6-phosphate + ATP = beta-D-fructose 1,6-bisphosphate + ADP + H(+). The protein operates within carbohydrate degradation; glycolysis; D-glyceraldehyde 3-phosphate and glycerone phosphate from D-glucose: step 3/4. With respect to regulation, allosterically activated by ADP and other diphosphonucleosides, and allosterically inhibited by phosphoenolpyruvate. Functionally, catalyzes the phosphorylation of D-fructose 6-phosphate to fructose 1,6-bisphosphate by ATP, the first committing step of glycolysis. In Bacillus cereus (strain ATCC 14579 / DSM 31 / CCUG 7414 / JCM 2152 / NBRC 15305 / NCIMB 9373 / NCTC 2599 / NRRL B-3711), this protein is ATP-dependent 6-phosphofructokinase.